The chain runs to 625 residues: MSTNQETRGFQSEVKQLLQLMIHSLYSNKEIFLRELISNASDAADKLRFKALSNPALYEGDGELRVRVSFDETLGTLTISDNGIGMNREQVIDHLGTIAKSGTKEFLNSLGTDQAKDSQLIGQFGVGFYSAFIVADKVTVKTRAAGETQAVLWESAGEGDYTVADIEKATRGTDVILHLREEEKEFLSEWRLREIIGKYSDHIGLPVEIQTTEYNEEGKASGQKWEKINKAQALWTRSKNEISDEEYQEFYKHLSHDYNDSLIWAHNKVEGKQEYTSLLYVPAKAPWDMFNREQKHGLKLYVQRVFIMDDAEVFMPNYLRFMRGLLDTNDLPLNVSREILQENKITASLRAALTKRALQLLEKLAKDDQAKYQTFWNEFGLVLKEGVGEDFANKQQIASLFRFASTQTDSSEQTVSLADYVGRMKEGQKAIYFLTADSYVAAKNSPHLELFNKKGIEVLLLSDRIDEWVVGHLTEFDGKPLQSITKSDLDLGDLADKEQEESQKAQQAEFGSFLERAQSYFGERVKKVVLTHRLTDTPAVVSTDNDEMTTQMAKLFAAMGQKAPEVKYTFELNPDHQMVKKIADLTDETEFNDWIELLFEQALLAERGSLENPAAFIKRMNKLLG.

The tract at residues 1–337 (MSTNQETRGF…TNDLPLNVSR (337 aa)) is a; substrate-binding. Positions 338–554 (EILQENKITA…NDEMTTQMAK (217 aa)) are b. Residues 555 to 625 (LFAAMGQKAP…FIKRMNKLLG (71 aa)) are c.

The protein belongs to the heat shock protein 90 family. As to quaternary structure, homodimer.

It localises to the cytoplasm. In terms of biological role, molecular chaperone. Has ATPase activity. This Actinobacillus pleuropneumoniae serotype 3 (strain JL03) protein is Chaperone protein HtpG.